We begin with the raw amino-acid sequence, 426 residues long: 3-isopropylmalate dehydratase large subunit (426 aa).

Residues Cys-307, Cys-367, and Cys-370 each coordinate [4Fe-4S] cluster.

This sequence belongs to the aconitase/IPM isomerase family. LeuC type 2 subfamily. In terms of assembly, heterodimer of LeuC and LeuD. The cofactor is [4Fe-4S] cluster.

It carries out the reaction (2R,3S)-3-isopropylmalate = (2S)-2-isopropylmalate. It functions in the pathway amino-acid biosynthesis; L-leucine biosynthesis; L-leucine from 3-methyl-2-oxobutanoate: step 2/4. In terms of biological role, catalyzes the isomerization between 2-isopropylmalate and 3-isopropylmalate, via the formation of 2-isopropylmaleate. The sequence is that of 3-isopropylmalate dehydratase large subunit from Sulfurovum sp. (strain NBC37-1).